Consider the following 428-residue polypeptide: Trigger factor (428 aa).

Positions 163–248 (GDMVVIDYKG…VHEIKEKELP (86 aa)) constitute a PPIase FKBP-type domain.

Belongs to the FKBP-type PPIase family. Tig subfamily.

The protein localises to the cytoplasm. It catalyses the reaction [protein]-peptidylproline (omega=180) = [protein]-peptidylproline (omega=0). In terms of biological role, involved in protein export. Acts as a chaperone by maintaining the newly synthesized protein in an open conformation. Functions as a peptidyl-prolyl cis-trans isomerase. This chain is Trigger factor, found in Alkaliphilus metalliredigens (strain QYMF).